A 300-amino-acid chain; its full sequence is MTKESKDMDCYLRRLKQELMSMKEVGDGLQDQMNCMMGALQELKLLQVQTALEQLEISGGTPTFSCPESSQEQPECPRWQGSGGPAGPAAWTSSSQPSFDSSPKLPCRRSVCGKELAVLPKTQLPEEHQSCTQQGTEWVEPDDWTSTLMSRGRNRQPLVLGDNVFADLVGNWLDLPELEKGGEKGETGGSIEPKGEKGQSRELGRKFALTANIFRKFLRSVRPDRDRLLKEKPGWMTPMVSESRAGRSKKVKKRSLSKGSGRFPFSSTGEPRHIETPATSSPKALEPSCRGFDINTAVWV.

3 disordered regions span residues 59-104 (GGTP…SSPK), 178-201 (LEKG…GQSR), and 230-288 (KEKP…LEPS). Polar residues predominate over residues 60 to 73 (GTPTFSCPESSQEQ). A compositionally biased stretch (low complexity) spans 93-102 (SSSQPSFDSS). Positions 140-183 (EPDDWTSTLMSRGRNRQPLVLGDNVFADLVGNWLDLPELEKGGE) are inka box. The span at 246–256 (GRSKKVKKRSL) shows a compositional bias: basic residues.

It belongs to the INKA family. Interacts with PAK4. In terms of tissue distribution, enriched in the nervous system.

It is found in the nucleus. In terms of biological role, inhibitor of the serine/threonine-protein kinase PAK4. Acts by binding PAK4 in a substrate-like manner, inhibiting the protein kinase activity. The polypeptide is PAK4-inhibitor INKA2 (Mus musculus (Mouse)).